The sequence spans 247 residues: Probable transcriptional regulatory protein Gura_1416 (247 aa).

Belongs to the TACO1 family.

It localises to the cytoplasm. In Geotalea uraniireducens (strain Rf4) (Geobacter uraniireducens), this protein is Probable transcriptional regulatory protein Gura_1416.